The chain runs to 417 residues: Probable lysophospholipase BODYGUARD 4 (417 aa).

Residues 1–49 (MSFPRKFGTAIHAALSFIVFFFLDLLDAILCVVYEFVDEILEENSTGCY) form the signal peptide. A lipid anchor (N-palmitoyl cysteine) is attached at C50. The 110-residue stretch at 150–259 (VIFIHGFMGS…PPYFPSSVEG (110 aa)) folds into the AB hydrolase-1 domain. The active site involves H154. Catalysis depends on S225, which acts as the Nucleophile. Active-site charge relay system residues include D367 and H395.

As to expression, expressed in epidermal cells.

Its subcellular location is the cell membrane. It localises to the secreted. The protein localises to the cell wall. In terms of biological role, involved in cuticle development and morphogenesis. The sequence is that of Probable lysophospholipase BODYGUARD 4 from Arabidopsis thaliana (Mouse-ear cress).